Consider the following 122-residue polypeptide: Large ribosomal subunit protein uL14 (122 aa).

This sequence belongs to the universal ribosomal protein uL14 family. As to quaternary structure, part of the 50S ribosomal subunit. Forms a cluster with proteins L3 and L19. In the 70S ribosome, L14 and L19 interact and together make contacts with the 16S rRNA in bridges B5 and B8.

Its function is as follows. Binds to 23S rRNA. Forms part of two intersubunit bridges in the 70S ribosome. This Acinetobacter baylyi (strain ATCC 33305 / BD413 / ADP1) protein is Large ribosomal subunit protein uL14.